A 586-amino-acid polypeptide reads, in one-letter code: Arginine--tRNA ligase (586 aa).

The 'HIGH' region motif lies at 128–138 (ANPTGPLHVGH).

Belongs to the class-I aminoacyl-tRNA synthetase family. As to quaternary structure, monomer.

It is found in the cytoplasm. It catalyses the reaction tRNA(Arg) + L-arginine + ATP = L-arginyl-tRNA(Arg) + AMP + diphosphate. This is Arginine--tRNA ligase from Thioalkalivibrio sulfidiphilus (strain HL-EbGR7).